The following is an 832-amino-acid chain: Putative beta-glucosidase (832 aa).

Residue aspartate 225 is part of the active site. The PA14 domain occupies 397-556 (TGKHGYVAKF…DPETEIDYAV (160 aa)).

It belongs to the glycosyl hydrolase 3 family.

It localises to the cytoplasm. It carries out the reaction Hydrolysis of terminal, non-reducing beta-D-glucosyl residues with release of beta-D-glucose.. The protein is Putative beta-glucosidase of Schizosaccharomyces pombe (strain 972 / ATCC 24843) (Fission yeast).